Reading from the N-terminus, the 135-residue chain is Small ribosomal subunit protein eS6 (135 aa).

This sequence belongs to the eukaryotic ribosomal protein eS6 family.

The chain is Small ribosomal subunit protein eS6 from Halorubrum lacusprofundi (strain ATCC 49239 / DSM 5036 / JCM 8891 / ACAM 34).